We begin with the raw amino-acid sequence, 206 residues long: Thymidylate kinase (206 aa).

10–17 (GVDGVGKT) contributes to the ATP binding site.

It belongs to the thymidylate kinase family.

It catalyses the reaction dTMP + ATP = dTDP + ADP. Functionally, phosphorylation of dTMP to form dTDP in both de novo and salvage pathways of dTTP synthesis. This Bifidobacterium longum (strain NCC 2705) protein is Thymidylate kinase.